A 207-amino-acid polypeptide reads, in one-letter code: Arginine exporter protein ArgO (207 aa).

Transmembrane regions (helical) follow at residues 1 to 21 (MLST…PLGP), 42 to 62 (LCAI…SALL), 67 to 87 (LLLQ…GWGA), 111 to 131 (VVAI…DTIV), 150 to 170 (FGAA…AAWF), and 185 to 205 (GFIC…GLLI).

It belongs to the LysE/ArgO transporter (TC 2.A.75) family.

It is found in the cell inner membrane. It carries out the reaction L-arginine(in) = L-arginine(out). Its function is as follows. Involved in the export of arginine. Important to control the intracellular level of arginine and the correct balance between arginine and lysine. In Photorhabdus laumondii subsp. laumondii (strain DSM 15139 / CIP 105565 / TT01) (Photorhabdus luminescens subsp. laumondii), this protein is Arginine exporter protein ArgO.